We begin with the raw amino-acid sequence, 236 residues long: Small ribosomal subunit protein uS2c (236 aa).

The protein belongs to the universal ribosomal protein uS2 family.

The protein resides in the plastid. The protein localises to the chloroplast. The protein is Small ribosomal subunit protein uS2c (rps2) of Ceratophyllum demersum (Rigid hornwort).